The sequence spans 157 residues: Peptide methionine sulfoxide reductase MsrA (157 aa).

Cys-10 is a catalytic residue.

Belongs to the MsrA Met sulfoxide reductase family.

The catalysed reaction is L-methionyl-[protein] + [thioredoxin]-disulfide + H2O = L-methionyl-(S)-S-oxide-[protein] + [thioredoxin]-dithiol. It catalyses the reaction [thioredoxin]-disulfide + L-methionine + H2O = L-methionine (S)-S-oxide + [thioredoxin]-dithiol. In terms of biological role, has an important function as a repair enzyme for proteins that have been inactivated by oxidation. Catalyzes the reversible oxidation-reduction of methionine sulfoxide in proteins to methionine. This is Peptide methionine sulfoxide reductase MsrA from Clostridium perfringens (strain ATCC 13124 / DSM 756 / JCM 1290 / NCIMB 6125 / NCTC 8237 / Type A).